The chain runs to 551 residues: Chaperonin GroEL (551 aa).

ATP is bound by residues Thr30–Pro33, Lys51, Asp87–Thr91, Gly415, Asn479–Ala481, and Asp495.

The protein belongs to the chaperonin (HSP60) family. In terms of assembly, forms a cylinder of 14 subunits composed of two heptameric rings stacked back-to-back. Interacts with the co-chaperonin GroES.

It is found in the cytoplasm. The enzyme catalyses ATP + H2O + a folded polypeptide = ADP + phosphate + an unfolded polypeptide.. In terms of biological role, together with its co-chaperonin GroES, plays an essential role in assisting protein folding. The GroEL-GroES system forms a nano-cage that allows encapsulation of the non-native substrate proteins and provides a physical environment optimized to promote and accelerate protein folding. The chain is Chaperonin GroEL from Acidithiobacillus ferrooxidans (strain ATCC 23270 / DSM 14882 / CIP 104768 / NCIMB 8455) (Ferrobacillus ferrooxidans (strain ATCC 23270)).